Reading from the N-terminus, the 158-residue chain is Ribosomal RNA large subunit methyltransferase H (158 aa).

Residues L76, G107, and 126-131 (LSGLTM) contribute to the S-adenosyl-L-methionine site.

Belongs to the RNA methyltransferase RlmH family. Homodimer.

It localises to the cytoplasm. The catalysed reaction is pseudouridine(1915) in 23S rRNA + S-adenosyl-L-methionine = N(3)-methylpseudouridine(1915) in 23S rRNA + S-adenosyl-L-homocysteine + H(+). Specifically methylates the pseudouridine at position 1915 (m3Psi1915) in 23S rRNA. The sequence is that of Ribosomal RNA large subunit methyltransferase H from Teredinibacter turnerae (strain ATCC 39867 / T7901).